The sequence spans 322 residues: MLIDSYGRVVDYLRVSVTERCNFRCRYCMPDEPFKDAGHSNVLSYEEMFEFIKICLDNGVKKIRLTGGEPLVRKGVENFVAMINGYKSGLDLAMTTNGYFLAKKAQALKDAGLKRINISLDTLDKTKAHFIARKDVLDNVIEGIETACNLGFGVKINTVALKSVNDNELIYLMDFAKEKGAQIRYIEFMENSHASSELQGLNKDQILDIISKKYNIKEITKSPNSPSSLFELEDGYKFGIIDPHKHDFCSTCNRLRLSAEGLLIPCLYYEDGKSIREAMRAGDIKKACEILNQVLADKPEKNKWENDGKGEISSRAFYQTGG.

In terms of domain architecture, Radical SAM core spans 5–217; the sequence is SYGRVVDYLR…DIISKKYNIK (213 aa). GTP is bound at residue Arg-14. Residues Cys-21 and Cys-25 each contribute to the [4Fe-4S] cluster site. S-adenosyl-L-methionine is bound at residue Tyr-27. Residue Cys-28 participates in [4Fe-4S] cluster binding. Arg-64 is a binding site for GTP. Residue Gly-68 coordinates S-adenosyl-L-methionine. Thr-95 serves as a coordination point for GTP. Ser-119 is a binding site for S-adenosyl-L-methionine. Lys-155 contributes to the GTP binding site. Position 189 (Met-189) interacts with S-adenosyl-L-methionine. The [4Fe-4S] cluster site is built by Cys-249 and Cys-252. Position 254–256 (254–256) interacts with GTP; it reads RLR. Cys-266 lines the [4Fe-4S] cluster pocket.

This sequence belongs to the radical SAM superfamily. MoaA family. In terms of assembly, monomer and homodimer. [4Fe-4S] cluster serves as cofactor.

The catalysed reaction is GTP + AH2 + S-adenosyl-L-methionine = (8S)-3',8-cyclo-7,8-dihydroguanosine 5'-triphosphate + 5'-deoxyadenosine + L-methionine + A + H(+). It participates in cofactor biosynthesis; molybdopterin biosynthesis. Functionally, catalyzes the cyclization of GTP to (8S)-3',8-cyclo-7,8-dihydroguanosine 5'-triphosphate. The sequence is that of GTP 3',8-cyclase from Campylobacter fetus subsp. fetus (strain 82-40).